The primary structure comprises 173 residues: Co-chaperone protein HscB homolog (173 aa).

The J domain maps to 5-77; the sequence is CHFALFELQP…AQRARYLLTI (73 aa).

The protein belongs to the HscB family. Interacts with HscA and stimulates its ATPase activity.

Functionally, co-chaperone involved in the maturation of iron-sulfur cluster-containing proteins. Seems to help targeting proteins to be folded toward HscA. The sequence is that of Co-chaperone protein HscB homolog from Pseudomonas fluorescens (strain Pf0-1).